We begin with the raw amino-acid sequence, 570 residues long: Proline--tRNA ligase (570 aa).

This sequence belongs to the class-II aminoacyl-tRNA synthetase family. ProS type 1 subfamily. As to quaternary structure, homodimer.

The protein resides in the cytoplasm. It carries out the reaction tRNA(Pro) + L-proline + ATP = L-prolyl-tRNA(Pro) + AMP + diphosphate. In terms of biological role, catalyzes the attachment of proline to tRNA(Pro) in a two-step reaction: proline is first activated by ATP to form Pro-AMP and then transferred to the acceptor end of tRNA(Pro). As ProRS can inadvertently accommodate and process non-cognate amino acids such as alanine and cysteine, to avoid such errors it has two additional distinct editing activities against alanine. One activity is designated as 'pretransfer' editing and involves the tRNA(Pro)-independent hydrolysis of activated Ala-AMP. The other activity is designated 'posttransfer' editing and involves deacylation of mischarged Ala-tRNA(Pro). The misacylated Cys-tRNA(Pro) is not edited by ProRS. The polypeptide is Proline--tRNA ligase (Neisseria meningitidis serogroup C / serotype 2a (strain ATCC 700532 / DSM 15464 / FAM18)).